A 342-amino-acid polypeptide reads, in one-letter code: Guanine nucleotide-binding protein alpha-9 subunit (342 aa).

Residue glycine 2 is the site of N-myristoyl glycine attachment. Cysteine 3 is lipidated: S-palmitoyl cysteine. The 315-residue stretch at 28 to 342 (REIKLLLLGS…IIQSILKLHY (315 aa)) folds into the G-alpha domain. Positions 31 to 44 (KLLLLGSGDSGKST) are G1 motif. GTP contacts are provided by residues 36-43 (GSGDSGKS), 167-173 (LRCRQRT), 192-196 (DVGGQ), 261-264 (NKND), and alanine 316. The Mg(2+) site is built by serine 43 and threonine 173. The tract at residues 165 to 173 (DVLRCRQRT) is G2 motif. Positions 188–197 (FRLIDVGGQK) are G3 motif. The segment at 257–264 (VLFLNKND) is G4 motif. The G5 motif stretch occupies residues 314-319 (TTATDT).

This sequence belongs to the G-alpha family. In terms of assembly, g proteins are composed of 3 units; alpha, beta and gamma. The alpha chain contains the guanine nucleotide binding site.

In terms of biological role, guanine nucleotide-binding proteins (G proteins) are involved as modulators or transducers in various transmembrane signaling systems. G alpha-9 antagonizes broad chemotactic response. It functions rapidly following receptor stimulation to negatively regulate PI3K/PTEN, adenylyl cyclase, and guanylyl cyclase pathways. The chain is Guanine nucleotide-binding protein alpha-9 subunit (gpaI) from Dictyostelium discoideum (Social amoeba).